Here is a 118-residue protein sequence, read N- to C-terminus: Large ribosomal subunit protein uL18 (118 aa).

Belongs to the universal ribosomal protein uL18 family. In terms of assembly, part of the 50S ribosomal subunit; part of the 5S rRNA/L5/L18/L25 subcomplex. Contacts the 5S and 23S rRNAs.

Its function is as follows. This is one of the proteins that bind and probably mediate the attachment of the 5S RNA into the large ribosomal subunit, where it forms part of the central protuberance. This Campylobacter jejuni subsp. jejuni serotype O:6 (strain 81116 / NCTC 11828) protein is Large ribosomal subunit protein uL18.